A 1006-amino-acid chain; its full sequence is MEGQSSRGSRRPGTRAGLGSLPMPQGVAQTGAPSKVDSSFQLPAKKNAALGPSEPRLALAPVGPRAAMSASSEGPRLALASPRPILAPLCTPEGQKTATAHRSSSLAPTSVGQLVMSASAGPKPPPATTGSVLAPTSLGLVMPASAGPRSPPVTLGPNLAPTSRDQKQEPPASVGPKPTLAASGLSLALASEEQPPELPSTPSPVPSPVLSPTQEQALAPASTASGAASVGQTSARKRDAPAPRPLPASEGHLQPPAQTSGPTGSPPCIQTSPDPRLSPSFRARPEALHSSPEDPVLPRPPQTLPLDVGQGPSEPGTHSPGLLSPTFRPGAPSGQTVPPPLPKPPRSPSRSPSHSPNRSPCVPPAPDMALPRLGTQSTGPGRCLSPNLQAQEAPAPVTTSSSTSTLSSSPWSAQPTWKSDPGFRITVVTWNVGTAMPPDDVTSLLHLGGGDDSDGADMIAIGLQEVNSMLNKRLKDALFTDQWSELFMDALGPFNFVLVSSVRMQGVILLLFAKYYHLPFLRDVQTDCTRTGLGGYWGNKGGVSVRLAAFGHMLCFLNCHLPAHMDKAEQRKDNFQTILSLQQFQGPGAQGILDHDLVFWFGDLNFRIESYDLHFVKFAIDSDQLHQLWEKDQLNMAKNTWPILKGFQEGPLNFAPTFKFDVGTNKYDTSAKKRKPAWTDRILWKVKAPGGGPSPSGRKSHRLQVTQHSYRSHMEYTVSDHKPVAAQFLLQFAFRDDMPLVRLEVADEWVRPEQAVVRYRMETVFARSSWDWIGLYRVGFRHCKDYVAYVWAKHEDVDGNTYQVTFSEESLPKGHGDFILGYYSHNHSILIGITEPFQISLPSSELASSSTDSSGTSSEGEDDSTLELLAPKSRSPSPGKSKRHRSRSPGLARFPGLALRPSSRERRGASRSPSPQSRRLSRVAPDRSSNGSSRGSSEEGPSGLPGPWAFPPAVPRSLGLLPALRLETVDPGGGGSWGPDREALAPNSLSPSPQGHRGLEEGGLGP.

A disordered region spans residues 1–416 (MEGQSSRGSR…SSSPWSAQPT (416 aa)). The span at 27-41 (VAQTGAPSKVDSSFQ) shows a compositional bias: polar residues. Arg56 is subject to Asymmetric dimethylarginine; alternate. Arg56 carries the omega-N-methylarginine; alternate modification. Omega-N-methylarginine is present on Arg65. Arg76 bears the Asymmetric dimethylarginine mark. Residue Arg83 is modified to Asymmetric dimethylarginine; alternate. Arg83 is subject to Omega-N-methylarginine; alternate. Over residues 94-112 (GQKTATAHRSSSLAPTSVG) the composition is skewed to polar residues. The RSXSXX motif 1 signature appears at 102 to 107 (RSSSLA). Positions 180–193 (LAASGLSLALASEE) are enriched in low complexity. Positions 196-209 (PELPSTPSPVPSPV) are enriched in pro residues. Positions 210–234 (LSPTQEQALAPASTASGAASVGQTS) are enriched in low complexity. Positions 256–273 (PAQTSGPTGSPPCIQTSP) are enriched in polar residues. 2 positions are modified to phosphoserine: Ser291 and Ser324. Residues 337-347 (VPPPLPKPPRS) show a composition bias toward pro residues. The SH3-binding signature appears at 345 to 350 (PRSPSR). Low complexity-rich tracts occupy residues 348-360 (PSRS…NRSP) and 398-409 (TTSSSTSTLSSS). Positions 350–355 (RSPSHS) match the RSXSXX motif 2 motif. The catalytic stretch occupies residues 425 to 728 (ITVVTWNVGT…SDHKPVAAQF (304 aa)). Residues 729–840 (LLQFAFRDDM…IGITEPFQIS (112 aa)) form a required for ruffle localization region. Residues 844–858 (SELASSSTDSSGTSS) are compositionally biased toward low complexity. The interval 844–1006 (SELASSSTDS…RGLEEGGLGP (163 aa)) is disordered. 2 consecutive short sequence motifs (RSXSXX motif) follow at residues 874–879 (RSPSPG) and 885–890 (RSRSPG). Ser903 is subject to Phosphoserine. An RSXSXX motif 5 motif is present at residues 911-916 (RSPSPQ). Residues 927-946 (RSSNGSSRGSSEEGPSGLPG) show a composition bias toward low complexity. Position 990 is a phosphoserine (Ser990).

This sequence belongs to the inositol 1,4,5-trisphosphate 5-phosphatase type II family.

The protein resides in the cytoplasm. The catalysed reaction is 1D-myo-inositol 1,4,5-trisphosphate + H2O = 1D-myo-inositol 1,4-bisphosphate + phosphate. It carries out the reaction 1D-myo-inositol 1,3,4,5-tetrakisphosphate + H2O = 1D-myo-inositol 1,3,4-trisphosphate + phosphate. The enzyme catalyses a 1,2-diacyl-sn-glycero-3-phospho-(1D-myo-inositol-4,5-bisphosphate) + H2O = a 1,2-diacyl-sn-glycero-3-phospho-(1D-myo-inositol 4-phosphate) + phosphate. In terms of biological role, inositol 5-phosphatase, which converts inositol 1,4,5-trisphosphate to inositol 1,4-bisphosphate. Also converts phosphatidylinositol 4,5-bisphosphate to phosphatidylinositol 4-phosphate and inositol 1,3,4,5-tetrakisphosphate to inositol 1,3,4-trisphosphate in vitro. May be involved in modulation of the function of inositol and phosphatidylinositol polyphosphate-binding proteins that are present at membranes ruffles. The chain is Phosphatidylinositol 4,5-bisphosphate 5-phosphatase A (INPP5J) from Homo sapiens (Human).